We begin with the raw amino-acid sequence, 298 residues long: Troponin T, cardiac muscle (298 aa).

Residues 1–70 (MSDIEEVVEE…EAKEAEDGPM (70 aa)) show a composition bias toward acidic residues. Disordered regions lie at residues 1–95 (MSDI…GERV) and 120–219 (FENR…EKKK). Ser-2 carries the N-acetylserine modification. Ser-2 is subject to Phosphoserine; by CK2. 2 stretches are compositionally biased toward basic and acidic residues: residues 120–183 (FENR…DEAR) and 203–219 (QTER…EKKK). Phosphothreonine; by PKC/PRKCA is present on Thr-204. Ser-208 is subject to Phosphoserine; by PKC/PRKCA. At Thr-213 the chain carries Phosphothreonine; by PKC/PRKCA and RAF1. Residue Thr-294 is modified to Phosphothreonine; by PKC/PRKCA.

This sequence belongs to the troponin T family. Phosphorylation at Thr-213 by PRKCA induces significant reduction in myofilament calcium sensitivity and actomyosin ATPase activity. Heart. The fetal heart shows a greater expression in the atrium than in the ventricle, while the adult heart shows a greater expression in the ventricle than in the atrium. Isoform 6 predominates in normal adult heart. Isoforms 1, 7 and 8 are expressed in fetal heart. Isoform 7 is also expressed in failing adult heart.

Functionally, troponin T is the tropomyosin-binding subunit of troponin, the thin filament regulatory complex which confers calcium-sensitivity to striated muscle actomyosin ATPase activity. The chain is Troponin T, cardiac muscle (TNNT2) from Homo sapiens (Human).